We begin with the raw amino-acid sequence, 439 residues long: Ribosomal protein uS12 methylthiotransferase RimO (439 aa).

Residues 2 to 114 (SKLYLMSLGC…IDEMILKKTN (113 aa)) form the MTTase N-terminal domain. 6 residues coordinate [4Fe-4S] cluster: Cys-11, Cys-45, Cys-77, Cys-146, Cys-150, and Cys-153. Residues 132 to 363 (TGSNSHAFIK…VDEVIEKSFE (232 aa)) form the Radical SAM core domain.

The protein belongs to the methylthiotransferase family. RimO subfamily. [4Fe-4S] cluster serves as cofactor.

It localises to the cytoplasm. The catalysed reaction is L-aspartate(89)-[ribosomal protein uS12]-hydrogen + (sulfur carrier)-SH + AH2 + 2 S-adenosyl-L-methionine = 3-methylsulfanyl-L-aspartate(89)-[ribosomal protein uS12]-hydrogen + (sulfur carrier)-H + 5'-deoxyadenosine + L-methionine + A + S-adenosyl-L-homocysteine + 2 H(+). In terms of biological role, catalyzes the methylthiolation of an aspartic acid residue of ribosomal protein uS12. The sequence is that of Ribosomal protein uS12 methylthiotransferase RimO from Campylobacter jejuni subsp. jejuni serotype O:2 (strain ATCC 700819 / NCTC 11168).